Consider the following 649-residue polypeptide: L-ornithine N(5)-monooxygenase (649 aa).

FAD-binding positions include 72–80 (EKRGHFAWH) and Gln91. Lys96 lines the substrate pocket. Val157 provides a ligand contact to FAD. NADP(+)-binding positions include 289 to 292 (AGQS) and Arg314. Substrate-binding positions include 328 to 331 (NSAA) and Asn359. NADP(+) is bound at residue 359–361 (NYS). The tract at residues 512-547 (AMQSDAVRSGKSSPGSGSDASSTSSQQTLASENSTE) is disordered. Residues 520-536 (SGKSSPGSGSDASSTSS) show a composition bias toward low complexity. Over residues 537–547 (QQTLASENSTE) the composition is skewed to polar residues. 569–571 (SLL) is a binding site for FAD. A substrate-binding site is contributed by Ser572. Positions 585–611 (LLQRLPRTRRGTASSAATQPAASTVAS) are disordered. Over residues 596–611 (TASSAATQPAASTVAS) the composition is skewed to low complexity.

It belongs to the lysine N(6)-hydroxylase/L-ornithine N(5)-oxygenase family. In terms of assembly, homotetramer. FAD serves as cofactor.

It catalyses the reaction L-ornithine + NADPH + O2 = N(5)-hydroxy-L-ornithine + NADP(+) + H2O. The enzyme catalyses L-ornithine + NADH + O2 = N(5)-hydroxy-L-ornithine + NAD(+) + H2O. It participates in siderophore biosynthesis; ferrichrome biosynthesis. Functionally, catalyzes the conversion of L-ornithine to N(5)-hydroxyornithine, the first step in the biosynthesis of all hydroxamate-containing siderophores, such as ferrichrome. This chain is L-ornithine N(5)-monooxygenase (SID1), found in Mycosarcoma maydis (Corn smut fungus).